The sequence spans 458 residues: Zinc finger protein 239 (458 aa).

A Glycyl lysine isopeptide (Lys-Gly) (interchain with G-Cter in SUMO2) cross-link involves residue Lys108. Ser191 bears the Phosphoserine mark. C2H2-type zinc fingers lie at residues 207 to 229, 235 to 257, 263 to 285, 291 to 313, 319 to 341, 347 to 369, 375 to 397, 403 to 425, and 431 to 453; these read YECS…QRDH, YKCE…QAVH, YKCD…HAVH, YKCD…QRVH, YECE…QRVH, YKCG…RCIH, YQCY…LRVH, YHCG…QRVH, and YECS…QRVH.

This sequence belongs to the krueppel C2H2-type zinc-finger protein family.

It localises to the nucleus. Its function is as follows. May be involved in transcriptional regulation. This chain is Zinc finger protein 239 (ZNF239), found in Pongo abelii (Sumatran orangutan).